The following is a 336-amino-acid chain: uncharacterized protein (336 aa).

The N-terminal stretch at 1–33 is a signal peptide; the sequence is MGSAWPAEIRKIAKISKRLLGATVILGFGVAEA.

This is an uncharacterized protein from Sinorhizobium fredii (strain NBRC 101917 / NGR234).